A 639-amino-acid chain; its full sequence is CTTNBP2 N-terminal-like protein (639 aa).

Residues 87-285 are a coiled coil; it reads MKQCKNMQER…DLEASHQHSS (199 aa). A phosphoserine mark is found at Ser284 and Ser285. Disordered regions lie at residues 387 to 430, 463 to 490, and 511 to 609; these read VENG…PCSS, RHKF…LSPT, and RFTS…AASL. Low complexity-rich tracts occupy residues 405–430 and 467–477; these read PLSS…PCSS and QSQADQDQQAS. Ser481, Ser488, Ser523, Ser527, Ser560, Ser563, and Ser568 each carry phosphoserine. A compositionally biased stretch (polar residues) spans 511-529; sequence RFTSQQGPIKPVSPNSSPF. Residues Thr570 and Thr590 each carry the phosphothreonine modification. Residues 587-600 are compositionally biased toward low complexity; that stretch reads PGLTPSPSATTPLT. Ser592 is subject to Phosphoserine.

As to quaternary structure, interacts with CTTN/cortactin; this interaction may redistribute CTTN to stress fibers. May form homomers. Associates with the core of STRIPAK complexes composed of PP2A catalytic and scaffolding subunits, the striatins (PP2A regulatory subunits), the striatin-associated proteins MOB4, STRIP1 and STRIP2, PDCD10 and members of the STE20 kinases, such as STK24 and STK26.

The protein localises to the cell projection. It localises to the lamellipodium. The protein resides in the cytoplasm. It is found in the cytoskeleton. Its subcellular location is the stress fiber. Regulates lamellipodial actin dynamics in a CTTN-dependent manner. Associates with core striatin-interacting phosphatase and kinase (STRIPAK) complex to form CTTNBP2NL-STRIPAK complexes. STRIPAK complexes have critical roles in protein (de)phosphorylation and are regulators of multiple signaling pathways including Hippo, MAPK, nuclear receptor and cytoskeleton remodeling. Different types of STRIPAK complexes are involved in a variety of biological processes such as cell growth, differentiation, apoptosis, metabolism and immune regulation. The polypeptide is CTTNBP2 N-terminal-like protein (Homo sapiens (Human)).